We begin with the raw amino-acid sequence, 671 residues long: Putative protein kinase C delta type homolog (671 aa).

The disordered stretch occupies residues 1-136; that stretch reads MMFTRAQVRK…ITNRRGAIKH (136 aa). A compositionally biased stretch (low complexity) spans 14–27; the sequence is SNSSSQRPRSSGGS. The span at 57 to 101 shows a compositional bias: basic and acidic residues; it reads ARRDQYRDRDHYGKHSFELPRQHSKEEAYHRDRESSAGGVDRGER. Residues 102-116 are compositionally biased toward gly residues; it reads SGIGGNGGGVTGGGV. 2 Phorbol-ester/DAG-type zinc fingers span residues 144–194 and 216–266; these read GHRF…LGKC and PHRF…ANLC. Residues 343–601 form the Protein kinase domain; it reads FHFLAVLGKG…AGDIADHIFF (259 aa). ATP is bound by residues 349–357 and K372; that span reads LGKGSFGKV. D467 functions as the Proton acceptor in the catalytic mechanism. An AGC-kinase C-terminal domain is found at 602–671; the sequence is RPIDWGLLEK…TYTNPHITLD (70 aa).

It belongs to the protein kinase superfamily. AGC Ser/Thr protein kinase family. PKC subfamily.

The enzyme catalyses L-seryl-[protein] + ATP = O-phospho-L-seryl-[protein] + ADP + H(+). It catalyses the reaction L-threonyl-[protein] + ATP = O-phospho-L-threonyl-[protein] + ADP + H(+). The polypeptide is Putative protein kinase C delta type homolog (Drosophila melanogaster (Fruit fly)).